Reading from the N-terminus, the 538-residue chain is MMSFTTSLPYPFHILLVFILSMASITLLGRILSRPTKTKDRSCQLPPGPPGWPILGNLPELFMTRPRSKYFRLAMKELKTDIACFNFAGIRAITINSDEIAREAFRERDADLADRPQLFIMETIGDNYKSMGISPYGEQFMKMKRVITTEIMSVKTLKMLEAARTIEADNLIAYVHSMYQRSETVDVRELSRVYGYAVTMRMLFGRRHVTKENVFSDDGRLGNAEKHHLEVIFNTLNCLPSFSPADYVERWLRGWNVDGQEKRVTENCNIVRSYNNPIIDERVQLWREEGGKAAVEDWLDTFITLKDQNGKYLVTPDEIKAQCVEFCIAAIDNPANNMEWTLGEMLKNPEILRKALKELDEVVGRDRLVQESDIPNLNYLKACCRETFRIHPSAHYVPSHLARQDTTLGGYFIPKGSHIHVCRPGLGRNPKIWKDPLVYKPERHLQGDGITKEVTLVETEMRFVSFSTGRRGCIGVKVGTIMMVMLLARFLQGFNWKLHQDFGPLSLEEDDASLLMAKPLHLSVEPRLAPNLYPKFRP.

The chain crosses the membrane as a helical span at residues 8–28; that stretch reads LPYPFHILLVFILSMASITLL.

It belongs to the cytochrome P450 family. Heme is required as a cofactor. As to expression, highly expressed in cotyledons, leaves, stems and siliques. Detected in flowers and lateral roots, but not in the main root. Expressed only in the vascular bundles in apical plant parts.

The protein localises to the endoplasmic reticulum membrane. The enzyme catalyses an L-polyhomomethionine + 2 reduced [NADPH--hemoprotein reductase] + 2 O2 = an (E)-omega-(methylsulfanyl)-alkanal oxime + 2 oxidized [NADPH--hemoprotein reductase] + CO2 + 3 H2O + 2 H(+). It carries out the reaction L-dihomomethionine + 2 reduced [NADPH--hemoprotein reductase] + 2 O2 = (E)-5-(methylsulfanyl)pentanal oxime + 2 oxidized [NADPH--hemoprotein reductase] + CO2 + 3 H2O + 2 H(+). The catalysed reaction is L-trihomomethionine + 2 reduced [NADPH--hemoprotein reductase] + 2 O2 = (E)-6-(methylsulfanyl)hexanal oxime + 2 oxidized [NADPH--hemoprotein reductase] + CO2 + 3 H2O + 2 H(+). Its function is as follows. Catalyzes the conversion of the short chain elongated methionines di-, tri-, and tetrahomomethionine to their respective aldoximes 5-methylthiopentanaldoxime, 6-methylthiohexanaldoxime, and 7-methylheptanaldoxime. The chain is Dihomomethionine N-hydroxylase (CYP79F1) from Arabidopsis thaliana (Mouse-ear cress).